A 362-amino-acid chain; its full sequence is D-alanine--D-alanine ligase (362 aa).

The ATP-grasp domain maps to 153–357 (KKIAREAGIP…YADLLTTLVS (205 aa)). 180–235 (RELLGLPVFVKPARGGSSIGISKVDSWRDLPAAIEEAASHDPKVIIEAMITGPEVE) serves as a coordination point for ATP. Residues aspartate 312, glutamate 324, and asparagine 326 each coordinate Mg(2+).

The protein belongs to the D-alanine--D-alanine ligase family. The cofactor is Mg(2+). It depends on Mn(2+) as a cofactor.

The protein resides in the cytoplasm. It carries out the reaction 2 D-alanine + ATP = D-alanyl-D-alanine + ADP + phosphate + H(+). The protein operates within cell wall biogenesis; peptidoglycan biosynthesis. Its function is as follows. Cell wall formation. The chain is D-alanine--D-alanine ligase from Corynebacterium urealyticum (strain ATCC 43042 / DSM 7109).